The following is a 508-amino-acid chain: Hydroxymethylglutaryl-CoA synthase, mitochondrial (508 aa).

The transit peptide at 1–37 (MQRLLTPVRQVLRVKRAMQEASFMPPLLPPAAHQRFS) directs the protein to the mitochondrion. At Lys52 the chain carries N6-succinyllysine. (3S)-3-hydroxy-3-methylglutaryl-CoA contacts are provided by Glu80 and Ala81. Glu132 functions as the Proton donor/acceptor in the catalytic mechanism. (3S)-3-hydroxy-3-methylglutaryl-CoA contacts are provided by Cys166, Asn204, and Thr208. Cys166 acts as the Acyl-thioester intermediate in catalysis. Lys243 is subject to N6-acetyllysine. An N6-acetyllysine; alternate modification is found at Lys256. Lys256 is subject to N6-succinyllysine; alternate. (3S)-3-hydroxy-3-methylglutaryl-CoA-binding residues include Ser258 and His301. The active-site Proton donor/acceptor is His301. An N6-acetyllysine modification is found at Lys306. Residue Lys310 participates in (3S)-3-hydroxy-3-methylglutaryl-CoA binding. Lys310 is modified (N6-acetyllysine; alternate). Lys310 carries the N6-succinyllysine; alternate modification. N6-succinyllysine is present on Lys333. 4 positions are modified to N6-acetyllysine; alternate: Lys342, Lys350, Lys354, and Lys358. N6-succinyllysine; alternate occurs at positions 342, 350, 354, and 358. (3S)-3-hydroxy-3-methylglutaryl-CoA contacts are provided by Asn380 and Ser414. Ser433 bears the Phosphoserine mark. The residue at position 437 (Lys437) is an N6-acetyllysine. Residues Ser440 and Ser456 each carry the phosphoserine modification. Lys473 is subject to N6-acetyllysine; alternate. Lys473 is subject to N6-succinyllysine; alternate.

It belongs to the thiolase-like superfamily. HMG-CoA synthase family. In terms of assembly, homodimer. In terms of processing, succinylated. Desuccinylated by SIRT5. Succinylation, at least at Lys-310, inhibits the enzymatic activity.

Its subcellular location is the mitochondrion. It catalyses the reaction acetoacetyl-CoA + acetyl-CoA + H2O = (3S)-3-hydroxy-3-methylglutaryl-CoA + CoA + H(+). Its pathway is metabolic intermediate biosynthesis; (R)-mevalonate biosynthesis; (R)-mevalonate from acetyl-CoA: step 2/3. In terms of biological role, catalyzes the first irreversible step in ketogenesis, condensing acetyl-CoA to acetoacetyl-CoA to form HMG-CoA, which is converted by HMG-CoA reductase (HMGCR) into mevalonate. This chain is Hydroxymethylglutaryl-CoA synthase, mitochondrial (HMGCS2), found in Sus scrofa (Pig).